The sequence spans 530 residues: Fusaric acid resistance protein FusA (530 aa).

The signal sequence occupies residues methionine 1–glycine 23. Cysteine 24 is lipidated: N-palmitoyl cysteine. A lipid anchor (S-diacylglycerol cysteine) is attached at cysteine 24. Disordered stretches follow at residues asparagine 375–alanine 442 and glycine 476–arginine 530. Low complexity-rich tracts occupy residues arginine 421–arginine 430 and alanine 494–arginine 530.

This sequence belongs to the outer membrane factor (OMF) (TC 1.B.17) family.

It localises to the cell membrane. Its function is as follows. Involved in the resistance (detoxification) of the fungal toxin fusaric acid. The protein is Fusaric acid resistance protein FusA (fusA) of Burkholderia cepacia (Pseudomonas cepacia).